A 67-amino-acid chain; its full sequence is Beta-defensin 103A (67 aa).

A signal peptide spans Met1–Gly22. 3 disulfide bridges follow: Cys33–Cys62, Cys40–Cys55, and Cys45–Cys63.

This sequence belongs to the beta-defensin family.

It is found in the secreted. Exhibits antimicrobial activity against Gram-positive and Gram-negative bacteria. This Equus caballus (Horse) protein is Beta-defensin 103A (DEFB103A).